The sequence spans 750 residues: Photosystem I P700 chlorophyll a apoprotein A1 (750 aa).

The next 8 membrane-spanning stretches (helical) occupy residues 70-93 (VFSA…FHGA), 156-179 (LYCT…FHYH), 195-219 (LNHH…HVSL), 291-309 (IAHH…GHMY), 346-369 (WHAQ…HHMY), 385-411 (LSLF…IFMV), 433-455 (AIIS…LYIH), and 531-549 (FLVH…LILL). [4Fe-4S] cluster-binding residues include Cys-573 and Cys-582. Transmembrane regions (helical) follow at residues 589–610 (HVFL…HFSW) and 664–686 (LSAY…MFLF). His-675 lines the chlorophyll a' pocket. Chlorophyll a contacts are provided by Met-683 and Tyr-691. Residue Trp-692 coordinates phylloquinone. The chain crosses the membrane as a helical span at residues 724-744 (AVGVTHYLLGGIATTWAFFLA).

This sequence belongs to the PsaA/PsaB family. As to quaternary structure, the PsaA/B heterodimer binds the P700 chlorophyll special pair and subsequent electron acceptors. PSI consists of a core antenna complex that captures photons, and an electron transfer chain that converts photonic excitation into a charge separation. The eukaryotic PSI reaction center is composed of at least 11 subunits. P700 is a chlorophyll a/chlorophyll a' dimer, A0 is one or more chlorophyll a, A1 is one or both phylloquinones and FX is a shared 4Fe-4S iron-sulfur center. is required as a cofactor.

The protein localises to the plastid. Its subcellular location is the chloroplast thylakoid membrane. It carries out the reaction reduced [plastocyanin] + hnu + oxidized [2Fe-2S]-[ferredoxin] = oxidized [plastocyanin] + reduced [2Fe-2S]-[ferredoxin]. PsaA and PsaB bind P700, the primary electron donor of photosystem I (PSI), as well as the electron acceptors A0, A1 and FX. PSI is a plastocyanin-ferredoxin oxidoreductase, converting photonic excitation into a charge separation, which transfers an electron from the donor P700 chlorophyll pair to the spectroscopically characterized acceptors A0, A1, FX, FA and FB in turn. Oxidized P700 is reduced on the lumenal side of the thylakoid membrane by plastocyanin. The sequence is that of Photosystem I P700 chlorophyll a apoprotein A1 from Citrus sinensis (Sweet orange).